The sequence spans 408 residues: 3-phosphoshikimate 1-carboxyvinyltransferase (408 aa).

3-phosphoshikimate-binding residues include lysine 10, serine 11, and arginine 15. Residue lysine 10 coordinates phosphoenolpyruvate. Phosphoenolpyruvate-binding residues include glycine 79 and arginine 107. Positions 150, 151, 152, 179, 297, and 324 each coordinate 3-phosphoshikimate. Glutamine 152 contributes to the phosphoenolpyruvate binding site. Residue glutamate 297 is the Proton acceptor of the active site. Positions 328, 369, and 394 each coordinate phosphoenolpyruvate.

The protein belongs to the EPSP synthase family. Monomer.

It localises to the cytoplasm. The catalysed reaction is 3-phosphoshikimate + phosphoenolpyruvate = 5-O-(1-carboxyvinyl)-3-phosphoshikimate + phosphate. Its pathway is metabolic intermediate biosynthesis; chorismate biosynthesis; chorismate from D-erythrose 4-phosphate and phosphoenolpyruvate: step 6/7. In terms of biological role, catalyzes the transfer of the enolpyruvyl moiety of phosphoenolpyruvate (PEP) to the 5-hydroxyl of shikimate-3-phosphate (S3P) to produce enolpyruvyl shikimate-3-phosphate and inorganic phosphate. This Corynebacterium efficiens (strain DSM 44549 / YS-314 / AJ 12310 / JCM 11189 / NBRC 100395) protein is 3-phosphoshikimate 1-carboxyvinyltransferase.